The primary structure comprises 328 residues: Carbonic anhydrase-related protein 10 (328 aa).

In terms of domain architecture, Alpha-carbonic anhydrase spans 31–301; sequence GWWAYKEVVQ…LNNRCIRTNI (271 aa).

This sequence belongs to the alpha-carbonic anhydrase family.

Its function is as follows. Does not have a catalytic activity. This is Carbonic anhydrase-related protein 10 (CA10) from Bos taurus (Bovine).